The chain runs to 305 residues: tRNA dimethylallyltransferase (305 aa).

8-15 (GPTAVGKT) is an ATP binding site. 10 to 15 (TAVGKT) contacts substrate. Residues 33–36 (DSRQ) form an interaction with substrate tRNA region.

The protein belongs to the IPP transferase family. Monomer. The cofactor is Mg(2+).

The enzyme catalyses adenosine(37) in tRNA + dimethylallyl diphosphate = N(6)-dimethylallyladenosine(37) in tRNA + diphosphate. Its function is as follows. Catalyzes the transfer of a dimethylallyl group onto the adenine at position 37 in tRNAs that read codons beginning with uridine, leading to the formation of N6-(dimethylallyl)adenosine (i(6)A). In Thermotoga sp. (strain RQ2), this protein is tRNA dimethylallyltransferase.